The primary structure comprises 1023 residues: MGKGVGRDKYEPAAVSEHGDKKGKKAKKERDMDELKKEVSMDDHKLSLDELHRKYGTDLSRGLTPARAAEILARDGPNALTPPPTTPEWVKFCRQLFGGFSMLLWIGAILCFLAYGIRSATEEEPPNDDLYLGVVLSAVVIITGCFSYYQEAKSSKIMESFKNMVPQQALVIRNGEKMSINAEDVVVGDLVEVKGGDRIPADLRIISANGCKVDNSSLTGESEPQTRSPDFTNENPLETRNIAFFSTNCVEGTARGIVVYTGDRTVMGRIATLASGLEGGQTPIAEEIEHFIHLITGVAVFLGVSFFILSLILEYTWLEAVIFLIGIIVANVPEGLLATVTVCLTLTAKRMARKNCLVKNLEAVETLGSTSTICSDKTGTLTQNRMTVAHMWFDNQIHEADTTENQSGVSFDKTSATWFALSRIAGLCNRAVFQANQENLPILKRAVAGDASESALLKCIEVCCGSVMEMREKYSKIVEIPFNSTNKYQLSIHKNPNASEPKHLLVMKGAPERILDRCSSILLHGKEQPLDEELKDAFQNAYLELGGLGERVLGFCHLLLPDEQFPEGFQFDTDDVNFPVDNLCFVGLISMIDPPRAAVPDAVGKCRSAGIKVIMVTGDHPITAKAIAKGVGIISEGNETVEDIAARLNIPVNQVNPRDAKACVVHGSDLKDMTSEELDDILRYHTEIVFARTSPQQKLIIVEGCQRQGAIVAVTGDGVNDSPALKKADIGVAMGIVGSDVSKQAADMILLDDNFASIVTGVEEGRLIFDNLKKSIAYTLTSNIPEITPFLIFIIANIPLPLGTVTILCIDLGTDMVPAISLAYEQAESDIMKRQPRNPKTDKLVNERLISMAYGQIGMIQALGGFFTYFVILAENGFLPFHLLGIRETWDDRWVNDVEDSYGQQWTYEQRKIVEFTCHTAFFVSIVVVQWADLVICKTRRNSVFQQGMKNKILIFGLFEETALAAFLSYCPGMGAALRMYPLKPTWWFCAFPYSLLIFVYDEVRKLIIRRRPGGWVEKETYY.

Residues methionine 1 to valine 5 constitute a propeptide that is removed on maturation. Over residues methionine 1–glutamate 11 the composition is skewed to basic and acidic residues. The disordered stretch occupies residues methionine 1 to valine 39. At glycine 6–leucine 96 the chain is on the cytoplasmic side. Lysine 9 bears the N6-acetyllysine mark. A Phosphotyrosine modification is found at tyrosine 10. Serine 16 is modified (phosphoserine). An N6-acetyllysine modification is found at lysine 21. The span at lysine 28–valine 39 shows a compositional bias: basic and acidic residues. A phosphoserine mark is found at serine 40 and serine 47. Positions proline 82–proline 84 are phosphoinositide-3 kinase binding. The chain crosses the membrane as a helical span at residues phenylalanine 97 to isoleucine 117. At arginine 118–aspartate 129 the chain is on the extracellular side. A helical membrane pass occupies residues leucine 130 to glutamine 150. Topologically, residues glutamate 151–phenylalanine 291 are cytoplasmic. The interval serine 216–asparagine 235 is disordered. Serine 228 carries the phosphoserine modification. Tyrosine 260 carries the phosphotyrosine modification. The chain crosses the membrane as a helical span at residues isoleucine 292–isoleucine 312. Residues leucine 313 to glutamate 319 are Extracellular-facing. The helical transmembrane segment at alanine 320–valine 340 threads the bilayer. At threonine 341–serine 775 the chain is on the cytoplasmic side. Catalysis depends on aspartate 376, which acts as the 4-aspartylphosphate intermediate. Phosphoserine occurs at positions 452 and 484. Lysine 487 serves as a coordination point for ATP. Tyrosine 542 carries the post-translational modification Phosphotyrosine. Positions arginine 596–aspartate 717 are mediates interaction with SCN7A. Lysine 661 carries the N6-succinyllysine modification. 2 positions are modified to phosphoserine: serine 668 and serine 675. Residues aspartate 717 and aspartate 721 each contribute to the Mg(2+) site. The helical transmembrane segment at isoleucine 776–isoleucine 798 threads the bilayer. The Extracellular segment spans residues proline 799 to proline 801. Residues leucine 802–tyrosine 824 form a helical membrane-spanning segment. The Cytoplasmic portion of the chain corresponds to glutamate 825–leucine 849. Residues isoleucine 850–isoleucine 872 form a helical membrane-spanning segment. Over leucine 873–glutamate 915 the chain is Extracellular. The chain crosses the membrane as a helical span at residues phenylalanine 916–isoleucine 936. The Cytoplasmic portion of the chain corresponds to cysteine 937–lysine 952. Residue serine 943 is modified to Phosphoserine; by PKA. Residues isoleucine 953–glycine 973 traverse the membrane as a helical segment. Residues methionine 974–arginine 979 are Extracellular-facing. Residues methionine 980 to valine 1000 traverse the membrane as a helical segment. Over tyrosine 1001 to tyrosine 1023 the chain is Cytoplasmic.

It belongs to the cation transport ATPase (P-type) (TC 3.A.3) family. Type IIC subfamily. In terms of assembly, the sodium/potassium-transporting ATPase is composed of a catalytic alpha subunit, an auxiliary non-catalytic beta subunit and an additional regulatory subunit. Interacts with regulatory subunit FXYD1. Interacts with regulatory subunit FXYD3. Interacts with SIK1. Interacts with SLC35G1 and STIM1. Interacts with CLN3; this interaction regulates the sodium/potassium-transporting ATPase complex localization at the plasma membrane. Interacts with SCN7A; activates ATP1A1 P-type sodium:potassium-exchanging transporter activity which indirectly signals to nearby neurons to regulate sodium homeostasis. In terms of processing, phosphorylation on Tyr-10 modulates pumping activity. Phosphorylation of Ser-943 by PKA modulates the response of ATP1A1 to PKC. Dephosphorylation by protein phosphatase 2A (PP2A) following increases in intracellular sodium, leading to increase catalytic activity.

Its subcellular location is the cell membrane. It localises to the basolateral cell membrane. The protein resides in the sarcolemma. The protein localises to the cell projection. It is found in the axon. Its subcellular location is the melanosome. The enzyme catalyses K(+)(out) + Na(+)(in) + ATP + H2O = K(+)(in) + Na(+)(out) + ADP + phosphate + H(+). This is the catalytic component of the active enzyme, which catalyzes the hydrolysis of ATP coupled with the exchange of sodium and potassium ions across the plasma membrane. This action creates the electrochemical gradient of sodium and potassium ions, providing the energy for active transport of various nutrients. Could also be part of an osmosensory signaling pathway that senses body-fluid sodium levels and controls salt intake behavior as well as voluntary water intake to regulate sodium homeostasis. In Mus musculus (Mouse), this protein is Sodium/potassium-transporting ATPase subunit alpha-1 (Atp1a1).